Consider the following 145-residue polypeptide: MSMAYEDYMRQLVQPMRDELVRAGFRELRTSEEVEQFMKQVEGTTFVFVNSVCGCAAGLARPAATQAVLRSEKKPDHLVTVFAGQDKEATAKMREYFVGYPPSSPSMALLKGKEVVHFIPREDIEFHSMEDVMENILAAFDKYCG.

It belongs to the bacilliredoxin family.

The polypeptide is Bacilliredoxin GK1781 (Geobacillus kaustophilus (strain HTA426)).